The following is a 924-amino-acid chain: Protein SMAX1-LIKE 2 (924 aa).

One can recognise a Clp R domain in the interval isoleucine 8–asparagine 181. Positions leucine 12–leucine 83 are repeat 1. Positions threonine 86–glutamine 105 are enriched in low complexity. The disordered stretch occupies residues threonine 86 to proline 107. The tract at residues leucine 109 to asparagine 181 is repeat 2. The segment at threonine 522 to lysine 552 is disordered. The short motif at phenylalanine 780–glutamate 784 is the EAR element.

It belongs to the ClpA/ClpB family. As to quaternary structure, interacts probably with TPL/TPR in an EAR-motif dependent manner. Expressed in seedlings and leaves. Detected in roots and axillary branches.

Probable component of a transcriptional corepressor complex that acts specifically in the karrikin pathway. Controls seedling growth redundantly with SMAX1, but is not involved in leaf morphology, shoot branching or germination control. The chain is Protein SMAX1-LIKE 2 from Arabidopsis thaliana (Mouse-ear cress).